A 233-amino-acid polypeptide reads, in one-letter code: Lipoprotein-releasing system ATP-binding protein LolD (233 aa).

The ABC transporter domain occupies 6–233 (LQCDNLCKRY…TAELSLMGAE (228 aa)). Residue 42–49 (GSSGSGKS) participates in ATP binding.

The protein belongs to the ABC transporter superfamily. Lipoprotein translocase (TC 3.A.1.125) family. The complex is composed of two ATP-binding proteins (LolD) and two transmembrane proteins (LolC and LolE).

The protein resides in the cell inner membrane. Its function is as follows. Part of the ABC transporter complex LolCDE involved in the translocation of mature outer membrane-directed lipoproteins, from the inner membrane to the periplasmic chaperone, LolA. Responsible for the formation of the LolA-lipoprotein complex in an ATP-dependent manner. This chain is Lipoprotein-releasing system ATP-binding protein LolD, found in Shigella dysenteriae serotype 1 (strain Sd197).